The chain runs to 164 residues: MFGENMCEYEADDIAEKISIKILKKYMRNKIYDTDNSNKPTNQFFCDLHILNKIIRYKCYRDDYERFVSEFIIHKLKYNFASVGYYVKPIIVTDKFELCFEYVVKCKIANHFVALVNSVILNEDSDKKDDKYYYCLIKKFCLNNEIDLKSDLFYYLSDYYCPKI.

This is an uncharacterized protein from Acanthamoeba polyphaga (Amoeba).